Reading from the N-terminus, the 133-residue chain is Holo-[acyl-carrier-protein] synthase (133 aa).

Mg(2+) contacts are provided by D8 and E57.

The protein belongs to the P-Pant transferase superfamily. AcpS family. It depends on Mg(2+) as a cofactor.

Its subcellular location is the cytoplasm. The enzyme catalyses apo-[ACP] + CoA = holo-[ACP] + adenosine 3',5'-bisphosphate + H(+). In terms of biological role, transfers the 4'-phosphopantetheine moiety from coenzyme A to a Ser of acyl-carrier-protein. The polypeptide is Holo-[acyl-carrier-protein] synthase (Caulobacter vibrioides (strain ATCC 19089 / CIP 103742 / CB 15) (Caulobacter crescentus)).